We begin with the raw amino-acid sequence, 179 residues long: Large ribosomal subunit protein uL5 (179 aa).

This sequence belongs to the universal ribosomal protein uL5 family. Part of the 50S ribosomal subunit; part of the 5S rRNA/L5/L18/L25 subcomplex. Contacts the 5S rRNA and the P site tRNA. Forms a bridge to the 30S subunit in the 70S ribosome.

Functionally, this is one of the proteins that bind and probably mediate the attachment of the 5S RNA into the large ribosomal subunit, where it forms part of the central protuberance. In the 70S ribosome it contacts protein S13 of the 30S subunit (bridge B1b), connecting the 2 subunits; this bridge is implicated in subunit movement. Contacts the P site tRNA; the 5S rRNA and some of its associated proteins might help stabilize positioning of ribosome-bound tRNAs. The chain is Large ribosomal subunit protein uL5 from Lachnoclostridium phytofermentans (strain ATCC 700394 / DSM 18823 / ISDg) (Clostridium phytofermentans).